Reading from the N-terminus, the 1027-residue chain is 2-oxoglutarate dehydrogenase, mitochondrial (1027 aa).

The thiamine diphosphate site is built by Arg-315, Asp-413, Asn-446, Ile-448, and Gln-674. Mg(2+) contacts are provided by Asp-413, Asn-446, and Ile-448.

This sequence belongs to the alpha-ketoglutarate dehydrogenase family. In terms of assembly, homodimer. Component of the 2-oxoglutarate dehydrogenase complex. Requires thiamine diphosphate as cofactor. It depends on Mg(2+) as a cofactor.

The protein resides in the mitochondrion matrix. It catalyses the reaction N(6)-[(R)-lipoyl]-L-lysyl-[protein] + 2-oxoglutarate + H(+) = N(6)-[(R)-S(8)-succinyldihydrolipoyl]-L-lysyl-[protein] + CO2. The 2-oxoglutarate dehydrogenase complex catalyzes the overall conversion of 2-oxoglutarate to succinyl-CoA and CO(2). It contains multiple copies of three enzymatic components: 2-oxoglutarate dehydrogenase (E1), dihydrolipoamide succinyltransferase (E2) and lipoamide dehydrogenase (E3). This chain is 2-oxoglutarate dehydrogenase, mitochondrial (ogdh-1), found in Caenorhabditis briggsae.